We begin with the raw amino-acid sequence, 241 residues long: Glucosamine-6-phosphate deaminase (241 aa).

Residue Asp67 is the Proton acceptor; for enolization step of the active site. The active-site For ring-opening step is Asn136. The active-site Proton acceptor; for ring-opening step is His138. Residue Glu143 is the For ring-opening step of the active site.

Belongs to the glucosamine/galactosamine-6-phosphate isomerase family. NagB subfamily.

The enzyme catalyses alpha-D-glucosamine 6-phosphate + H2O = beta-D-fructose 6-phosphate + NH4(+). It functions in the pathway amino-sugar metabolism; N-acetylneuraminate degradation; D-fructose 6-phosphate from N-acetylneuraminate: step 5/5. In terms of biological role, catalyzes the reversible isomerization-deamination of glucosamine 6-phosphate (GlcN6P) to form fructose 6-phosphate (Fru6P) and ammonium ion. This chain is Glucosamine-6-phosphate deaminase, found in Alkaliphilus oremlandii (strain OhILAs) (Clostridium oremlandii (strain OhILAs)).